Reading from the N-terminus, the 126-residue chain is UPF0325 protein VFMJ11_2099 (126 aa).

Belongs to the UPF0325 family.

The sequence is that of UPF0325 protein VFMJ11_2099 from Aliivibrio fischeri (strain MJ11) (Vibrio fischeri).